Consider the following 183-residue polypeptide: MADVRTHSHQLQVHPQRQHEGGIKVLYPQSGPSSTQVLAVFVGVPIGGTLLTIAGLTLAGSVIGLMLAFPLFLIFSPVIVPAAFVIGLAMTGFLASGAIGLTGLSSMSWVLNYIRRAGQHIPEELEEAKHRLADMAEYVGQRTKDAGQTIEDKAHDVREAKTFDVRDRDTTKGTHNVRDTKTT.

Residues 1–39 (MADVRTHSHQLQVHPQRQHEGGIKVLYPQSGPSSTQVLA) form a polar region. A run of 3 helical transmembrane segments spans residues 37-57 (VLAVFVGVPIGGTLLTIAGLT), 66-86 (MLAFPLFLIFSPVIVPAAFVI), and 87-107 (GLAMTGFLASGAIGLTGLSSM). A hydrophobic region spans residues 40 to 113 (VFVGVPIGGT…LSSMSWVLNY (74 aa)). Residues 144-183 (KDAGQTIEDKAHDVREAKTFDVRDRDTTKGTHNVRDTKTT) are disordered.

Belongs to the oleosin family.

It is found in the lipid droplet. The protein localises to the membrane. May have a structural role to stabilize the lipid body during desiccation of the seed by preventing coalescence of the oil. Probably interacts with both lipid and phospholipid moieties of lipid bodies. May also provide recognition signals for specific lipase anchorage in lipolysis during seedling growth. The sequence is that of Oleosin 5 from Arabidopsis thaliana (Mouse-ear cress).